Reading from the N-terminus, the 531-residue chain is Polygalacturonase (531 aa).

Positions 1 to 23 are cleaved as a signal peptide; it reads MILSHRYTLIALAAAILSSGAHA. Aspartate 307 functions as the Proton donor in the catalytic mechanism. Histidine 333 is an active-site residue. The required for PGA export across the outer membrane and catalytic activity stretch occupies residues 518 to 531; the sequence is AFVPLKSVAPTSPI.

The protein belongs to the glycosyl hydrolase 28 family. As to quaternary structure, monomer.

Its subcellular location is the secreted. The catalysed reaction is (1,4-alpha-D-galacturonosyl)n+m + H2O = (1,4-alpha-D-galacturonosyl)n + (1,4-alpha-D-galacturonosyl)m.. Functionally, contributes to the wilt disease production on tomato. The chain is Polygalacturonase (pglA) from Ralstonia nicotianae (strain ATCC BAA-1114 / GMI1000) (Ralstonia solanacearum).